The primary structure comprises 242 residues: 1-(5-phosphoribosyl)-5-[(5-phosphoribosylamino)methylideneamino] imidazole-4-carboxamide isomerase (242 aa).

Asp8 acts as the Proton acceptor in catalysis. Asp129 (proton donor) is an active-site residue.

The protein belongs to the HisA/HisF family.

Its subcellular location is the cytoplasm. The catalysed reaction is 1-(5-phospho-beta-D-ribosyl)-5-[(5-phospho-beta-D-ribosylamino)methylideneamino]imidazole-4-carboxamide = 5-[(5-phospho-1-deoxy-D-ribulos-1-ylimino)methylamino]-1-(5-phospho-beta-D-ribosyl)imidazole-4-carboxamide. It functions in the pathway amino-acid biosynthesis; L-histidine biosynthesis; L-histidine from 5-phospho-alpha-D-ribose 1-diphosphate: step 4/9. This is 1-(5-phosphoribosyl)-5-[(5-phosphoribosylamino)methylideneamino] imidazole-4-carboxamide isomerase from Clostridium botulinum (strain ATCC 19397 / Type A).